The following is a 351-amino-acid chain: Anthranilate phosphoribosyltransferase (351 aa).

5-phospho-alpha-D-ribose 1-diphosphate-binding positions include Gly-80, 83-84, Thr-88, 90-93, 108-116, and Ser-120; these read GD, NIST, and KHGNRSVTS. Gly-80 serves as a coordination point for anthranilate. Ser-92 lines the Mg(2+) pocket. Residue Asn-111 participates in anthranilate binding. Arg-166 contributes to the anthranilate binding site. Residues Asp-229 and Glu-230 each coordinate Mg(2+).

The protein belongs to the anthranilate phosphoribosyltransferase family. As to quaternary structure, homodimer. Mg(2+) serves as cofactor.

It carries out the reaction N-(5-phospho-beta-D-ribosyl)anthranilate + diphosphate = 5-phospho-alpha-D-ribose 1-diphosphate + anthranilate. It participates in amino-acid biosynthesis; L-tryptophan biosynthesis; L-tryptophan from chorismate: step 2/5. Its function is as follows. Catalyzes the transfer of the phosphoribosyl group of 5-phosphorylribose-1-pyrophosphate (PRPP) to anthranilate to yield N-(5'-phosphoribosyl)-anthranilate (PRA). The chain is Anthranilate phosphoribosyltransferase from Chlorobium limicola (strain DSM 245 / NBRC 103803 / 6330).